A 452-amino-acid polypeptide reads, in one-letter code: Cobyrinate a,c-diamide synthase (452 aa).

One can recognise a GATase cobBQ-type domain in the interval 248–441 (RVAYALDAAF…LHIHFYQNPA (194 aa)). The Nucleophile role is filled by Cys-330.

The protein belongs to the CobB/CbiA family. Requires Mg(2+) as cofactor.

The enzyme catalyses cob(II)yrinate + 2 L-glutamine + 2 ATP + 2 H2O = cob(II)yrinate a,c diamide + 2 L-glutamate + 2 ADP + 2 phosphate + 2 H(+). The protein operates within cofactor biosynthesis; adenosylcobalamin biosynthesis; cob(II)yrinate a,c-diamide from sirohydrochlorin (anaerobic route): step 10/10. In terms of biological role, catalyzes the ATP-dependent amidation of the two carboxylate groups at positions a and c of cobyrinate, using either L-glutamine or ammonia as the nitrogen source. The polypeptide is Cobyrinate a,c-diamide synthase (Listeria innocua serovar 6a (strain ATCC BAA-680 / CLIP 11262)).